Consider the following 465-residue polypeptide: Argininosuccinate lyase (465 aa).

The protein belongs to the lyase 1 family. Argininosuccinate lyase subfamily.

Its subcellular location is the cytoplasm. It catalyses the reaction 2-(N(omega)-L-arginino)succinate = fumarate + L-arginine. The protein operates within amino-acid biosynthesis; L-arginine biosynthesis; L-arginine from L-ornithine and carbamoyl phosphate: step 3/3. This chain is Argininosuccinate lyase, found in Hyphomonas neptunium (strain ATCC 15444).